The chain runs to 1202 residues: DNA-directed RNA polymerase subunit beta (1202 aa).

Residues 1151 to 1162 (LRDMDEEDDDVV) show a composition bias toward acidic residues. Residues 1151–1202 (LRDMDEEDDDVVNVDALSKYAEKQNEKTNASAEEAKAPSTESAPVETKNNQN) are disordered. The segment covering 1189–1202 (STESAPVETKNNQN) has biased composition (polar residues).

This sequence belongs to the RNA polymerase beta chain family. As to quaternary structure, the RNAP catalytic core consists of 2 alpha, 1 beta, 1 beta' and 1 omega subunit. When a sigma factor is associated with the core the holoenzyme is formed, which can initiate transcription.

The catalysed reaction is RNA(n) + a ribonucleoside 5'-triphosphate = RNA(n+1) + diphosphate. Its function is as follows. DNA-dependent RNA polymerase catalyzes the transcription of DNA into RNA using the four ribonucleoside triphosphates as substrates. This is DNA-directed RNA polymerase subunit beta from Pediococcus pentosaceus (strain ATCC 25745 / CCUG 21536 / LMG 10740 / 183-1w).